Here is a 293-residue protein sequence, read N- to C-terminus: N-acetylneuraminate lyase (293 aa).

Aceneuramate-binding residues include Ser48 and Ser49. Tyr137 (proton donor) is an active-site residue. Lys165 functions as the Schiff-base intermediate with substrate in the catalytic mechanism. Aceneuramate contacts are provided by Thr167, Gly189, Asp191, Glu192, and Ser208.

Belongs to the DapA family. NanA subfamily. As to quaternary structure, homotetramer.

It localises to the cytoplasm. It carries out the reaction aceneuramate = aldehydo-N-acetyl-D-mannosamine + pyruvate. It functions in the pathway amino-sugar metabolism; N-acetylneuraminate degradation; D-fructose 6-phosphate from N-acetylneuraminate: step 1/5. Catalyzes the reversible aldol cleavage of N-acetylneuraminic acid (sialic acid; Neu5Ac) to form pyruvate and N-acetylmannosamine (ManNAc) via a Schiff base intermediate. This is N-acetylneuraminate lyase from Staphylococcus aureus (strain Mu3 / ATCC 700698).